The following is a 308-amino-acid chain: HTH-type transcriptional regulator SsuR (308 aa).

In terms of domain architecture, HTH lysR-type spans methionine 1–leucine 59. Positions leucine 19 to lysine 38 form a DNA-binding region, H-T-H motif.

It belongs to the LysR transcriptional regulatory family.

Its function is as follows. Transcriptional regulator that is essential for the utilization of a number of organic sulfur sources of either environmental or human origin. Required for aliphatic sulfonate utilization. Binds to DNA at target promoter regions. Targets include the ssuDBC operon, the tauABC operon, three tauD-type genes and atsA. This is HTH-type transcriptional regulator SsuR from Burkholderia cenocepacia (strain ATCC BAA-245 / DSM 16553 / LMG 16656 / NCTC 13227 / J2315 / CF5610) (Burkholderia cepacia (strain J2315)).